The sequence spans 421 residues: UDP-N-acetylglucosamine 1-carboxyvinyltransferase (421 aa).

22–23 (KN) is a binding site for phosphoenolpyruvate. UDP-N-acetyl-alpha-D-glucosamine is bound at residue arginine 93. Cysteine 117 serves as the catalytic Proton donor. Position 117 is a 2-(S-cysteinyl)pyruvic acid O-phosphothioketal (cysteine 117). Residues 122–126 (RPVDL), aspartate 308, and isoleucine 330 each bind UDP-N-acetyl-alpha-D-glucosamine.

Belongs to the EPSP synthase family. MurA subfamily.

It localises to the cytoplasm. The catalysed reaction is phosphoenolpyruvate + UDP-N-acetyl-alpha-D-glucosamine = UDP-N-acetyl-3-O-(1-carboxyvinyl)-alpha-D-glucosamine + phosphate. It participates in cell wall biogenesis; peptidoglycan biosynthesis. Its function is as follows. Cell wall formation. Adds enolpyruvyl to UDP-N-acetylglucosamine. This Pseudomonas putida (strain W619) protein is UDP-N-acetylglucosamine 1-carboxyvinyltransferase.